The primary structure comprises 81 residues: MKTLLLTLVVVTTVCLDLGYTLKCNKLVPLFYKTCPAGKNLCYKMYMVATPKVPVKRGCIDVCPKSSLLVKYVCCNTDRCN.

The signal sequence occupies residues 1–21; that stretch reads MKTLLLTLVVVTTVCLDLGYT. 4 disulfide bridges follow: Cys-24/Cys-42, Cys-35/Cys-59, Cys-63/Cys-74, and Cys-75/Cys-80.

This sequence belongs to the three-finger toxin family. Short-chain subfamily. Type IA cytotoxin sub-subfamily. Monomer in solution; Homodimer and oligomer in the presence of negatively charged lipids forming a pore with a size ranging between 20 and 30 Angstroms. As to expression, expressed by the venom gland.

The protein localises to the secreted. Its subcellular location is the target cell membrane. Shows cytolytic activity on many different cells by forming pore in lipid membranes. In vivo, increases heart rate or kills the animal by cardiac arrest. In addition, it binds to heparin with high affinity, interacts with Kv channel-interacting protein 1 (KCNIP1) in a calcium-independent manner, and binds to integrin alpha-V/beta-3 (ITGAV/ITGB3) with moderate affinity. This chain is Cytotoxin 2b, found in Naja sputatrix (Malayan spitting cobra).